A 405-amino-acid polypeptide reads, in one-letter code: Accessory Sec system protein translocase subunit SecY2 (405 aa).

A run of 10 helical transmembrane segments spans residues 14–34 (MCTL…LPFV), 65–85 (LFSI…MFSF), 104–124 (MYLT…NLPV), 131–151 (FLVF…LVWL), 156–176 (ATIG…ASLP), 190–210 (LGLL…VVLF), 243–263 (GMPY…LLLL), 285–305 (PLWI…FAFV), 343–363 (FALI…LFVL), and 368–388 (LLKV…LFTI).

This sequence belongs to the SecY/SEC61-alpha family. SecY2 subfamily. As to quaternary structure, component of the accessory SecA2/SecY2 protein translocase complex required to export cell wall proteins. May form heterotrimers with SecE and SecG subunits.

The protein localises to the cell membrane. In terms of biological role, part of the accessory SecA2/SecY2 system specifically required for export of possible cell wall proteins. The central subunit of a protein translocation channel. The protein is Accessory Sec system protein translocase subunit SecY2 of Streptococcus oralis (strain Uo5).